A 407-amino-acid chain; its full sequence is Protein COS9 (407 aa).

The next 3 membrane-spanning stretches (helical) occupy residues 75 to 95, 98 to 118, and 261 to 281; these read TWLL…IKSI, IFPF…LPNI, and IFNL…YVSW.

The protein belongs to the DUP/COS family.

It localises to the membrane. This Saccharomyces cerevisiae (strain ATCC 204508 / S288c) (Baker's yeast) protein is Protein COS9 (COS9).